Consider the following 411-residue polypeptide: Serine hydroxymethyltransferase (411 aa).

(6S)-5,6,7,8-tetrahydrofolate-binding positions include Leu-119 and 123–125 (GHL). Lys-228 bears the N6-(pyridoxal phosphate)lysine mark. (6S)-5,6,7,8-tetrahydrofolate is bound at residue 351-353 (SPF).

The protein belongs to the SHMT family. Homodimer. It depends on pyridoxal 5'-phosphate as a cofactor.

Its subcellular location is the cytoplasm. The enzyme catalyses (6R)-5,10-methylene-5,6,7,8-tetrahydrofolate + glycine + H2O = (6S)-5,6,7,8-tetrahydrofolate + L-serine. It functions in the pathway one-carbon metabolism; tetrahydrofolate interconversion. Its pathway is amino-acid biosynthesis; glycine biosynthesis; glycine from L-serine: step 1/1. In terms of biological role, catalyzes the reversible interconversion of serine and glycine with tetrahydrofolate (THF) serving as the one-carbon carrier. This reaction serves as the major source of one-carbon groups required for the biosynthesis of purines, thymidylate, methionine, and other important biomolecules. Also exhibits THF-independent aldolase activity toward beta-hydroxyamino acids, producing glycine and aldehydes, via a retro-aldol mechanism. The sequence is that of Serine hydroxymethyltransferase from Clostridium botulinum (strain Alaska E43 / Type E3).